A 602-amino-acid polypeptide reads, in one-letter code: Elongation factor 4 (602 aa).

In terms of domain architecture, tr-type G spans 7–189 (KYIRNFSIVA…AIVNKVPAPD (183 aa)). GTP contacts are provided by residues 19-24 (DHGKST) and 136-139 (NKID).

This sequence belongs to the TRAFAC class translation factor GTPase superfamily. Classic translation factor GTPase family. LepA subfamily.

Its subcellular location is the cell membrane. The enzyme catalyses GTP + H2O = GDP + phosphate + H(+). Its function is as follows. Required for accurate and efficient protein synthesis under certain stress conditions. May act as a fidelity factor of the translation reaction, by catalyzing a one-codon backward translocation of tRNAs on improperly translocated ribosomes. Back-translocation proceeds from a post-translocation (POST) complex to a pre-translocation (PRE) complex, thus giving elongation factor G a second chance to translocate the tRNAs correctly. Binds to ribosomes in a GTP-dependent manner. The polypeptide is Elongation factor 4 (Clostridium botulinum (strain Kyoto / Type A2)).